Here is a 323-residue protein sequence, read N- to C-terminus: D-alanine--D-alanine ligase (323 aa).

Residues 121-317 (RIWFLTNNIN…FTNLIEEIIK (197 aa)) enclose the ATP-grasp domain. 147 to 199 (PMKRPYVIKPLAQGSSIGVEVIFAEDDFNFADYDFPYGDQVIIEQYIKGQGRE) contributes to the ATP binding site. Positions 270, 284, and 286 each coordinate Mg(2+).

Belongs to the D-alanine--D-alanine ligase family. The cofactor is Mg(2+). It depends on Mn(2+) as a cofactor.

The protein resides in the cytoplasm. The catalysed reaction is 2 D-alanine + ATP = D-alanyl-D-alanine + ADP + phosphate + H(+). The protein operates within cell wall biogenesis; peptidoglycan biosynthesis. Its function is as follows. Cell wall formation. The polypeptide is D-alanine--D-alanine ligase (Rickettsia peacockii (strain Rustic)).